Here is a 7079-residue protein sequence, read N- to C-terminus: Replicase polyprotein 1ab (7079 aa).

Residues 12–127 (THVQLSLPVL…YRNVLLRKNG (116 aa)) form the CoV Nsp1 globular domain. In terms of domain architecture, BetaCoV Nsp1 C-terminal spans 148–179 (ELGTDPIEDYEQNWNTKHGGGVLRELIRELNG). Residues 183–456 (TRYVDNNFCG…NEDLMEILNR (274 aa)) enclose the CoV Nsp2 N-terminal domain. Zn(2+) contacts are provided by C200, C231, H234, H236, C323, C326, C341, C344, C370, C373, H382, and C416. Residues 200-236 (CIKDLLARAGKSMCTLSEQLDYIESKRGVYCCREHEH) are C2H2. Positions 323–344 (CNHCDEVSWQTCDFLKATCEQC) are C4. Residues 370 to 416 (CPACQDPEVGPEHSVADYHNHSNIETRLRKGGRTKCFGGCVFAYVGC) are C2HC. Positions 458–688 (RVNINIVGDF…LDVLNKALEM (231 aa)) constitute a CoV Nsp2 middle domain. Positions 690-818 (IDQVIIAGAK…TNNVFSLKGG (129 aa)) constitute a CoV Nsp2 C-terminal domain. The Ubiquitin-like 1 domain occupies 822-930 (KGVTFGEDTV…MYCSFYPPDE (109 aa)). Macro domains lie at 1001-1167 (VNQF…LGYL), 1213-1341 (KFKA…LPSK), and 1349-1476 (ILGT…TSSS). The DPUP domain maps to 1478–1544 (TSEEHFIETV…LLDKLKSLLS (67 aa)). One can recognise a Ubiquitin-like 2 domain in the interval 1548–1603 (VRTIKVFTTVDNTNLHTQIVDMSMTYGQQFGPTYLDGADVTKIKPHAKHEGKTFFV). Residues 1617–1881 (YYHTLDESFL…YTEIQPKLDE (265 aa)) form the Peptidase C16 domain. C1657 serves as the catalytic For PL-PRO activity. 4 residues coordinate Zn(2+): C1735, C1738, C1770, and C1772. The segment at 1735–1772 (CKTCGQKSTTLTGVEAVMYMGTLSYEELKTGVTIPCIC) adopts a C4-type zinc-finger fold. Catalysis depends on for PL-PRO activity residues H1818 and D1832. The region spanning 1894–2004 (PIDLVPTQPL…CLWSTKPVET (111 aa)) is the Nucleic acid-binding domain. Positions 2029–2138 (PTSEEVVENP…LGQAAVTTTN (110 aa)) constitute a G2M domain. Positions 2098-2377 (LALGLRTLAT…IFFAFCYYVW (280 aa)) are HD1. The chain crosses the membrane as a helical span at residues 2209–2229 (LFTIAMWLLLLSICLGSLIYV). Positions 2230–2300 (TAAFGVLLSN…QVTISSYKLD (71 aa)) constitute a 3Ecto domain. Disulfide bonds link C2246-C2274 and C2265-C2271. A run of 2 helical transmembrane segments spans residues 2310–2330 (WFLA…SAIM) and 2357–2377 (MAPV…YYVW). Residues 2378–2468 (KSYVHIMDGC…QFKRPINPTD (91 aa)) are Y1. In terms of domain architecture, CoV Nsp3 Y spans 2378 to 2746 (KSYVHIMDGC…ITTKISLKGG (369 aa)). Zn(2+) contacts are provided by H2382, C2387, C2392, C2395, C2428, H2431, C2435, and C2438. The segment at 2382-2395 (HIMDGCTSSTCMMC) is ZF1. Residues 2428-2438 (CKAHNWNCLNC) are ZF2. A Y2 region spans residues 2469 to 2563 (QSSYVVDSVA…LLDQALVSDV (95 aa)). The segment at 2469–2746 (QSSYVVDSVA…ITTKISLKGG (278 aa)) is coV-Y. Residues 2564–2645 (GDSTEVSVKM…ECLKLSHHSD (82 aa)) form a Y3 region. Positions 2646–2746 (LEVTGDSCNN…ITTKISLKGG (101 aa)) are Y4. Transmembrane regions (helical) follow at residues 2761–2781 (LLCV…SLSV), 2998–3018 (PGVF…TPLV), 3028–3048 (ASVV…YYFM), 3060–3080 (VVAA…LAPA), 3083–3103 (FLPG…TNDV), 3111–3131 (WFAM…VFCI), and 3148–3168 (VMFN…TFLL). Residues 2761–3168 (LLCVLAALFC…EEAALCTFLL (408 aa)) form an HD2 region. Positions 3148–3246 (VMFNGVTFST…QTSITSAVLQ (99 aa)) constitute a Nsp4C domain. A Peptidase C30 domain is found at 3247 to 3552 (SGFRKMAFPS…VRQCSGVTFQ (306 aa)). Catalysis depends on for 3CL-PRO activity residues H3287 and C3391. 7 consecutive transmembrane segments (helical) span residues 3570 to 3590 (FLTS…FFVY), 3592 to 3612 (NAFL…MLLV), 3618 to 3638 (FLCL…MVYM), 3665 to 3684 (CVMY…RTVY), 3691 to 3710 (VWTL…GNSL), 3734 to 3754 (IMFL…LLFI), and 3762 to 3782 (IMLV…LFCL). Residues 3570–3782 (FLTSLLILVQ…CCCYFGLFCL (213 aa)) are HD3. Residues 3843 to 3925 (SKMSDVKCTS…EMLDNRATLQ (83 aa)) form the RdRp Nsp7 cofactor domain. The RdRp Nsp8 cofactor domain occupies 3926 to 4123 (AIASEFSSLP…LRANSAVKLQ (198 aa)). The Nsp9 ssRNA-binding domain maps to 4124–4236 (NNELSPVALR…GSLAATVRLQ (113 aa)). The ExoN/MTase coactivator domain maps to 4237–4375 (AGNATEVPAN…CDQLREPMMQ (139 aa)). Residues C4310, C4313, H4319, C4326, C4353, C4356, C4364, and C4366 each contribute to the Zn(2+) site. Zinc fingers lie at residues 4310 to 4326 (CLYC…KGFC) and 4353 to 4366 (CTVC…GCSC). The NiRAN domain occupies 4382–4636 (FLNRVCGVSA…AAESHMDADL (255 aa)). The Mn(2+) site is built by N4584 and D4593. The Nsp12 Interface domain occupies 4641-4739 (IKWDLLKYDF…HNQDVNLHSS (99 aa)). Residues H4670, C4676, C4681, C4685, and C4862 each contribute to the Zn(2+) site. Positions 4740–5307 (RLSFKELLVY…AMYTPHTVLQ (568 aa)) constitute a Nsp12 RNA-dependent RNA polymerase domain. Residues 4742-4956 (SFKELLVYAA…HQKLLKSIAA (215 aa)) are rdRp Fingers N-ter. The segment at 4957-4995 (TRGATVVIGTSKFYGGWHNMLKTVYSDVETPHLMGWDYP) is rdRp Palm N-ter. Residues 4987 to 5149 (PHLMGWDYPK…CYNSNYAAQG (163 aa)) enclose the RdRp catalytic domain. A rdRp Fingers C-ter region spans residues 4996–5054 (KCDRAMPNMLRIMASLVLARKHSTCCNLSHRFYRLANECAQVLSEMVMCGGSLYVKPGG). Zn(2+) contacts are provided by H5017, C5020, and C5021. The tract at residues 5055-5190 (TSSGDATTAY…TKGPHEFCSQ (136 aa)) is rdRp Palm C-ter. Residues S5134, D5135, and D5136 contribute to the active site. The rdRp Thumb stretch occupies residues 5191 to 5307 (HTMLVKQGDD…AMYTPHTVLQ (117 aa)). A CV ZBD domain is found at 5308–5420 (AVGACVLCNS…TDFNAIATCD (113 aa)). 12 residues coordinate Zn(2+): C5312, C5315, C5323, C5326, C5333, C5336, H5340, H5346, C5357, C5362, C5379, and H5382. The (+)RNA virus helicase ATP-binding domain occupies 5564-5745 (NISDEFSSNV…MKTIGPDMFL (182 aa)). 5589–5596 (GPPGTGKS) contacts ATP. The (+)RNA virus helicase C-terminal domain maps to 5746–5915 (GTCRRCPAEI…TLQAENVTGL (170 aa)). Residues 5980–6195 (MFITREEAIR…RCLAVHECFV (216 aa)) enclose the ExoN domain. Catalysis depends on residues D5998, E6000, and E6099. Residues C6115, C6118, C6134, H6137, H6165, C6169, and H6172 each coordinate Zn(2+). Catalysis depends on residues H6176 and D6181. Zn(2+) is bound at residue C6187. The region spanning 6204–6435 (YPIIGDELKI…NLWNTFTRLQ (232 aa)) is the N7-MTase domain. Residue 6239–6245 (DIGNPKA) coordinates S-adenosyl-L-methionine. A gpppA-binding region spans residues 6322-6336 (CDGGSLYVNKHAFHT). Zn(2+) is bound by residues C6360, C6381, C6392, and H6395. The Nsp15 N-terminal oligomerization domain maps to 6436 to 6496 (SLENVAYNVV…NVAFELWAKR (61 aa)). An AV-Nsp11N/CoV-Nsp15M domain is found at 6497–6622 (NIKPVPEIKI…YFKKVDGIIQ (126 aa)). In terms of domain architecture, NendoU spans 6639–6778 (KPRSKMETDF…KDGHVETFYP (140 aa)). Active-site residues include H6669, H6684, K6724, K6827, D6911, K6951, and E6984. The Nidovirus-type SAM-dependent 2'-O-MTase domain maps to 6783 to 7077 (SQAWQPGVAM…RVVVSSDILV (295 aa)).

This sequence belongs to the coronaviruses polyprotein 1ab family. Interacts with host PHB and PHB2. In terms of assembly, interacts with papain-like protease nsp3 and non-structural protein 6. As to quaternary structure, monomer. Homodimer. Only the homodimer shows catalytic activity. Interacts with nsp8 and nsp12 to form the replication-transcription complex (RTC): nsp12, nsp7, two subunits of nsp8, and up to two subunits of nsp13. In terms of assembly, interacts with nsp7, nsp13 and nsp12 to form the replication-transcription complex (RTC): nsp12, nsp7, two subunits of nsp8, and up to two subunits of nsp13. As to quaternary structure, interacts with nsp12. Interacts with proofreading exoribonuclease nsp14 and 2'-O-methyltransferase nsp16; these interactions enhance nsp14 and nsp16 enzymatic activities. In terms of assembly, interacts with nsp7 and nsp8 to form the replication-transcription complex (RTC): nsp12, nsp7, two subunits of nsp8, and up to two subunits of nsp13. Interacts with nsp9. As to quaternary structure, interacts with nsp8 to form the replication-transcription complex (RTC): nsp12, nsp7, two subunits of nsp8, and up to two subunits of nsp13. The cofactor is Mn(2+). Mg(2+) serves as cofactor. Post-translationally, specific enzymatic cleavages in vivo by its own proteases yield mature proteins. 3CL-PRO and PL-PRO proteinases are autocatalytically processed.

Its subcellular location is the host membrane. It localises to the host cytoplasm. The protein resides in the host perinuclear region. The protein localises to the host endoplasmic reticulum-Golgi intermediate compartment. It carries out the reaction RNA(n) + a ribonucleoside 5'-triphosphate = RNA(n+1) + diphosphate. The enzyme catalyses ATP + H2O = ADP + phosphate + H(+). It catalyses the reaction Thiol-dependent hydrolysis of ester, thioester, amide, peptide and isopeptide bonds formed by the C-terminal Gly of ubiquitin (a 76-residue protein attached to proteins as an intracellular targeting signal).. The catalysed reaction is a 5'-end (N(7)-methyl 5'-triphosphoguanosine)-ribonucleoside in mRNA + S-adenosyl-L-methionine = a 5'-end (N(7)-methyl 5'-triphosphoguanosine)-(2'-O-methyl-ribonucleoside) in mRNA + S-adenosyl-L-homocysteine + H(+). It carries out the reaction uridylyl-uridylyl-ribonucleotide-RNA = a 3'-end uridylyl-2',3'-cyclophospho-uridine-RNA + a 5'-end dephospho-ribonucleoside-RNA. The enzyme catalyses a 5'-end diphospho-ribonucleoside in mRNA + GTP + H(+) = a 5'-end (5'-triphosphoguanosine)-ribonucleoside in mRNA + diphosphate. It catalyses the reaction a 5'-end (5'-triphosphoguanosine)-ribonucleoside in mRNA + S-adenosyl-L-methionine = a 5'-end (N(7)-methyl 5'-triphosphoguanosine)-ribonucleoside in mRNA + S-adenosyl-L-homocysteine. Its function is as follows. The replicase polyprotein of coronaviruses is a multifunctional protein: it contains the activities necessary for the transcription of negative stranded RNA, leader RNA, subgenomic mRNAs and progeny virion RNA as well as proteinases responsible for the cleavage of the polyprotein into functional products. In terms of biological role, inhibits host translation by interacting with the 40S ribosomal subunit. The nsp1-40S ribosome complex further induces an endonucleolytic cleavage near the 5'UTR of host mRNAs, targeting them for degradation. Viral mRNAs are not susceptible to nsp1-mediated endonucleolytic RNA cleavage thanks to the presence of a 5'-end leader sequence and are therefore protected from degradation. By suppressing host gene expression, nsp1 facilitates efficient viral gene expression in infected cells and evasion from host immune response. May play a role in the modulation of host cell survival signaling pathway by interacting with host PHB and PHB2. Indeed, these two proteins play a role in maintaining the functional integrity of the mitochondria and protecting cells from various stresses. Functionally, responsible for the cleavages located at the N-terminus of the replicase polyprotein. In addition, PL-PRO possesses a deubiquitinating/deISGylating activity and processes both 'Lys-48'- and 'Lys-63'-linked polyubiquitin chains from cellular substrates. Participates together with nsp4 in the assembly of virally-induced cytoplasmic double-membrane vesicles necessary for viral replication. Antagonizes innate immune induction of type I interferon by blocking the phosphorylation, dimerization and subsequent nuclear translocation of host IRF3. Also prevents host NF-kappa-B signaling. Its function is as follows. Participates in the assembly of virally-induced cytoplasmic double-membrane vesicles necessary for viral replication. In terms of biological role, cleaves the C-terminus of replicase polyprotein at 11 sites. Recognizes substrates containing the core sequence [ILMVF]-Q-|-[SGACN]. Also able to bind an ADP-ribose-1''-phosphate (ADRP). Plays a role in the initial induction of autophagosomes from host endoplasmic reticulum. Later, limits the expansion of these phagosomes that are no longer able to deliver viral components to lysosomes. Functionally, forms a hexadecamer with nsp8 (8 subunits of each) that may participate in viral replication by acting as a primase. Alternatively, may synthesize substantially longer products than oligonucleotide primers. Its function is as follows. Forms a hexadecamer with nsp7 (8 subunits of each) that may participate in viral replication by acting as a primase. Alternatively, may synthesize substantially longer products than oligonucleotide primers. In terms of biological role, forms a primer, NSP9-pU, which is utilized by the polymerase for the initiation of RNA chains. Interacts with ribosome signal recognition particle RNA (SRP). Together with NSP8, suppress protein integration into the cell membrane, thereby disrupting host immune defenses. Plays a pivotal role in viral transcription by stimulating both nsp14 3'-5' exoribonuclease and nsp16 2'-O-methyltransferase activities. Therefore plays an essential role in viral mRNAs cap methylation. Functionally, RNA-directed RNA polymerase that catalyzes the transcription of viral genomic and subgenomic RNAs. Acts in complex with nsp7 and nsp8 to transcribe both the minus and positive strands of genomic RNA. The kinase-like NiRAN domain of NSP12 attaches one or more nucleotides to the amino terminus of NSP9, forming a covalent RNA-protein intermediate that serves as transcription/replication primer. Subgenomic RNAs (sgRNAs) are formed by discontinuous transcription: The polymerase has the ability to pause at transcription-regulating sequences (TRS) and jump to the leader TRS, resulting in a major deletion. This creates a series of subgenomic RNAs that are replicated, transcribed and translated. In addition, Nsp12 is a subunit of the viral RNA capping enzyme that catalyzes the RNA guanylyltransferase reaction for genomic and sub-genomic RNAs. Subsequently, the NiRAN domain transfers RNA to GDP, and forms the core cap structure GpppA-RNA. Its function is as follows. Multi-functional protein with a zinc-binding domain in N-terminus displaying RNA and DNA duplex-unwinding activities with 5' to 3' polarity. Activity of helicase is dependent on magnesium. In terms of biological role, plays a role in viral RNA synthesis through two distinct activities. The N7-guanine methyltransferase activity plays a role in the formation of the cap structure GpppA-RNA. The proofreading exoribonuclease reduces the sensitivity of the virus to RNA mutagens during replication. This activity acts on both ssRNA and dsRNA in a 3'-5' direction. Plays a role in viral transcription/replication and prevents the simultaneous activation of host cell dsRNA sensors, such as MDA5/IFIH1, OAS, and PKR. Acts by degrading the 5'-polyuridines generated during replication of the poly(A) region of viral genomic and subgenomic RNAs. Catalyzes a two-step reaction in which a 2'3'-cyclic phosphate (2'3'-cP) is first generated by 2'-O transesterification, which is then hydrolyzed to a 3'-phosphate (3'-P). If not degraded, poly(U) RNA would hybridize with poly(A) RNA tails and activate host dsRNA sensors. Functionally, methyltransferase that mediates mRNA cap 2'-O-ribose methylation to the 5'-cap structure of viral mRNAs. N7-methyl guanosine cap is a prerequisite for binding of nsp16. Therefore plays an essential role in viral mRNAs cap methylation which is essential to evade immune system. This chain is Replicase polyprotein 1ab (rep), found in Bat coronavirus 279/2005 (BtCoV).